We begin with the raw amino-acid sequence, 298 residues long: Putative glycylpeptide N-tetradecanoyltransferase (298 aa).

It belongs to the NMT family.

It carries out the reaction N-terminal glycyl-[protein] + tetradecanoyl-CoA = N-tetradecanoylglycyl-[protein] + CoA + H(+). Its function is as follows. Adds a myristoyl group to the N-terminal glycine residue of certain proteins. The polypeptide is Putative glycylpeptide N-tetradecanoyltransferase (Melanoplus sanguinipes (Migratory grasshopper)).